We begin with the raw amino-acid sequence, 567 residues long: Potassium-transporting ATPase potassium-binding subunit (567 aa).

Transmembrane regions (helical) follow at residues 5 to 25, 64 to 84, 136 to 156, 179 to 199, 254 to 274, 285 to 305, 330 to 350, 357 to 376, 421 to 441, 486 to 506, and 529 to 549; these read GWIQILVFCGIIGLLTKPLGF, TAYAVALLLFNLAGFLVLYAL, GLTVQNFVSAATGIAIAIALI, LYVLLPLCIVLTLVYVWLGIP, ISNLIQMVTIFALGAALTNVF, WAILASMGALFIAGVAVCYWA, FGIALSALFAVITTAASCGAV, FTALGGMIPLINMQLGEVIV, MLAILCLPLAMLIFTAIAVVL, ITIGIGMLMGRFLVIIPALAI, and LFVGLLIGVIVIVGGLTFFPA.

This sequence belongs to the KdpA family. In terms of assembly, the system is composed of three essential subunits: KdpA, KdpB and KdpC.

It localises to the cell inner membrane. Its function is as follows. Part of the high-affinity ATP-driven potassium transport (or Kdp) system, which catalyzes the hydrolysis of ATP coupled with the electrogenic transport of potassium into the cytoplasm. This subunit binds the periplasmic potassium ions and delivers the ions to the membrane domain of KdpB through an intramembrane tunnel. The chain is Potassium-transporting ATPase potassium-binding subunit from Mesorhizobium japonicum (strain LMG 29417 / CECT 9101 / MAFF 303099) (Mesorhizobium loti (strain MAFF 303099)).